The following is a 336-amino-acid chain: Nuclear envelope-associated protein 1 (336 aa).

The stretch at 125–261 (CSMLKQQLDD…RRTDQDLKKK (137 aa)) forms a coiled coil. The Bipartite nuclear localization signal signature appears at 240–261 (KTKELESQLEKQRRTDQDLKKK). Residues 313–330 (FWDNSGFKIVVSMSMLML) traverse the membrane as a helical segment.

As to quaternary structure, forms heteromers with NEAP2 and NEAP3. Interacts with SUN1; SUN2 and bZIP18.

It is found in the nucleus inner membrane. The protein resides in the nucleus. It localises to the nucleoplasm. This chain is Nuclear envelope-associated protein 1, found in Arabidopsis thaliana (Mouse-ear cress).